The primary structure comprises 814 residues: Acyl-coenzyme A dehydrogenase (814 aa).

Glutamate 497 serves as the catalytic Proton acceptor.

This sequence belongs to the acyl-CoA dehydrogenase family. FAD is required as a cofactor.

The enzyme catalyses a medium-chain 2,3-saturated fatty acyl-CoA + oxidized [electron-transfer flavoprotein] + H(+) = a medium-chain (2E)-enoyl-CoA + reduced [electron-transfer flavoprotein]. The catalysed reaction is a long-chain 2,3-saturated fatty acyl-CoA + oxidized [electron-transfer flavoprotein] + H(+) = a long-chain (2E)-enoyl-CoA + reduced [electron-transfer flavoprotein]. Its pathway is lipid metabolism; fatty acid beta-oxidation. Catalyzes the dehydrogenation of acyl-coenzymes A (acyl-CoAs) to 2-enoyl-CoAs, the first step of the beta-oxidation cycle of fatty acid degradation. Is required for the utilization of medium- and long-chain fatty acids as sole carbon sources for growth. The chain is Acyl-coenzyme A dehydrogenase (fadE) from Escherichia coli O157:H7.